Here is a 377-residue protein sequence, read N- to C-terminus: tRNA N6-adenosine threonylcarbamoyltransferase (377 aa).

The Fe cation site is built by histidine 129 and histidine 133. Substrate is bound by residues 151-155, aspartate 184, glycine 197, and asparagine 298; that span reads LVSGG. Residue aspartate 326 participates in Fe cation binding. Residues 358 to 377 are disordered; sequence DGAAAKSDPAIGSGRKGPKA.

Belongs to the KAE1 / TsaD family. Requires Fe(2+) as cofactor.

The protein localises to the cytoplasm. It catalyses the reaction L-threonylcarbamoyladenylate + adenosine(37) in tRNA = N(6)-L-threonylcarbamoyladenosine(37) in tRNA + AMP + H(+). In terms of biological role, required for the formation of a threonylcarbamoyl group on adenosine at position 37 (t(6)A37) in tRNAs that read codons beginning with adenine. Is involved in the transfer of the threonylcarbamoyl moiety of threonylcarbamoyl-AMP (TC-AMP) to the N6 group of A37, together with TsaE and TsaB. TsaD likely plays a direct catalytic role in this reaction. This chain is tRNA N6-adenosine threonylcarbamoyltransferase, found in Maricaulis maris (strain MCS10) (Caulobacter maris).